Consider the following 441-residue polypeptide: Hexane cyclase gkaB (441 aa).

The signal sequence occupies residues 1-25 (MTKFLAGAAIVLAVAFGSFFSQSST). Asparagine 77, asparagine 153, asparagine 184, and asparagine 308 each carry an N-linked (GlcNAc...) asparagine glycan.

The protein belongs to the Diels-Alderase family.

It participates in mycotoxin biosynthesis. Hexane cyclase; part of the gene cluster that mediates the biosynthesis of GKK1032, fungal natural products containing a macrocyclic para-cyclophane connected to a decahydrofluorene ring system that show potent antitumor activities. Within the pathway, gkaB functions synergistically with gkaX and gkaZ to form the cyclophane. The pathway begins with the PKS-NRPS gkaA which, with the help of the trans-enoyl reductase gkaC, synthesizes the polyketide-tyrosyl acyl thioester product which can be reductively off-loaded by the terminal reductase (R) domain in gkaA. The alpha/beta hydrolase gkaG is then required to catalyze the subsequent Knoevenagel condensation that affords the 3-pyrrolin-2-one ring, whereas the three proteins gkaB, gkaX and gkaZ then function synergistically to form the cyclophane. The protein is Hexane cyclase gkaB of Penicillium citrinum.